Here is a 470-residue protein sequence, read N- to C-terminus: Ribosomal protein uS12 methylthiotransferase RimO (470 aa).

Residues 33 to 143 (NKIGFVSLGC…VLEHVHQYAP (111 aa)) enclose the MTTase N-terminal domain. Cysteine 42, cysteine 78, cysteine 107, cysteine 175, cysteine 179, and cysteine 182 together coordinate [4Fe-4S] cluster. Residues 161–398 (LTPKHYAYLK…MLVQQEISAA (238 aa)) form the Radical SAM core domain. One can recognise a TRAM domain in the interval 401–467 (QKRIGSTMQV…EYDLWGSVLH (67 aa)).

Belongs to the methylthiotransferase family. RimO subfamily. [4Fe-4S] cluster serves as cofactor.

It is found in the cytoplasm. It catalyses the reaction L-aspartate(89)-[ribosomal protein uS12]-hydrogen + (sulfur carrier)-SH + AH2 + 2 S-adenosyl-L-methionine = 3-methylsulfanyl-L-aspartate(89)-[ribosomal protein uS12]-hydrogen + (sulfur carrier)-H + 5'-deoxyadenosine + L-methionine + A + S-adenosyl-L-homocysteine + 2 H(+). In terms of biological role, catalyzes the methylthiolation of an aspartic acid residue of ribosomal protein uS12. This is Ribosomal protein uS12 methylthiotransferase RimO from Vibrio cholerae serotype O1 (strain ATCC 39541 / Classical Ogawa 395 / O395).